The following is a 54-amino-acid chain: uncharacterized protein (54 aa).

A helical membrane pass occupies residues 32 to 52; the sequence is LFSLLVLIILCFIDPILFYFI.

The protein localises to the host membrane. This is an uncharacterized protein from Cassava vein mosaic virus (CsVMV).